Consider the following 529-residue polypeptide: Nuclear protein localization protein 4 homolog 1 (529 aa).

Residues 129 to 266 (IQIENQELVN…ITEYSMDRHY (138 aa)) enclose the MPN domain. The segment at 499–529 (SGGAVWNCGHCTFQNEAARQDCSMCGLPAAD) adopts a RanBP2-type zinc-finger fold.

It belongs to the NPL4 family. In terms of assembly, forms a complex composed of ubxn-3, ufd-1, npl-4.1 and cdc-48.1; within the complex, interacts with ufd-1 and ubxn-3. Interacts with ufd-1. Interacts with elc-1/elongin C; the interaction may mediate the interaction between the npl-4-ufd-1-cdc-48 complex and the E3 ubiquitin ligase cul-2 complex.

Its subcellular location is the cytoplasm. It is found in the nucleus. Its function is as follows. In association with ufd-1 and ATPase cdc-48.1 and/or cdc-48.2, involved in the cytoplasmic elimination of misfolded proteins exported from the ER. This pathway, known as ERAD, prevents the activation of the unfolded protein response (UPR) caused by the accumulation of misfolded proteins in the ER. During S phase and in association with ufd-1, cdc-48.1 and/or cdc-48.2 and ubxn-3, ensures the degradation of DNA licensing factor cdt-1 after the initiation of DNA replication and thus the disassembly of the DNA replication CGM helicase complex by promoting the dissociation from chromatin of several of its components including cdc-45 and sld-5. Regulates ubxn-3 nuclear localization during S phase. In Caenorhabditis elegans, this protein is Nuclear protein localization protein 4 homolog 1.